Reading from the N-terminus, the 99-residue chain is Probable small ribosomal subunit protein cS23 (99 aa).

Belongs to the chloroplast-specific ribosomal protein cS23 family. In terms of assembly, part of the 30S ribosomal subunit.

Probably a ribosomal protein or a ribosome-associated protein. The sequence is that of Probable small ribosomal subunit protein cS23 from Synechococcus sp. (strain JA-2-3B'a(2-13)) (Cyanobacteria bacterium Yellowstone B-Prime).